The chain runs to 215 residues: NADH-quinone oxidoreductase subunit C (215 aa).

Belongs to the complex I 30 kDa subunit family. NDH-1 is composed of 14 different subunits. Subunits NuoB, C, D, E, F, and G constitute the peripheral sector of the complex.

It localises to the cell inner membrane. The enzyme catalyses a quinone + NADH + 5 H(+)(in) = a quinol + NAD(+) + 4 H(+)(out). Its function is as follows. NDH-1 shuttles electrons from NADH, via FMN and iron-sulfur (Fe-S) centers, to quinones in the respiratory chain. The immediate electron acceptor for the enzyme in this species is believed to be ubiquinone. Couples the redox reaction to proton translocation (for every two electrons transferred, four hydrogen ions are translocated across the cytoplasmic membrane), and thus conserves the redox energy in a proton gradient. The polypeptide is NADH-quinone oxidoreductase subunit C (Francisella philomiragia subsp. philomiragia (strain ATCC 25017 / CCUG 19701 / FSC 153 / O#319-036)).